The following is a 181-amino-acid chain: Ribulose bisphosphate carboxylase small subunit, chloroplastic 2 (181 aa).

A chloroplast-targeting transit peptide spans 1 to 57 (MASSVISSAAVATRTNVTQAGSMIAPFTGLKSAATFPVSRKQNLDITSIASNGGRVR).

The protein belongs to the RuBisCO small chain family. In terms of assembly, heterohexadecamer of 8 large and 8 small subunits.

It is found in the plastid. The protein resides in the chloroplast. Functionally, ruBisCO catalyzes two reactions: the carboxylation of D-ribulose 1,5-bisphosphate, the primary event in carbon dioxide fixation, as well as the oxidative fragmentation of the pentose substrate. Both reactions occur simultaneously and in competition at the same active site. Although the small subunit is not catalytic it is essential for maximal activity. The chain is Ribulose bisphosphate carboxylase small subunit, chloroplastic 2 from Solanum tuberosum (Potato).